We begin with the raw amino-acid sequence, 451 residues long: Tubulin beta-1 chain (451 aa).

An MREI motif motif is present at residues 1–4; sequence MREI. Residues Gln11, Glu69, Ser138, Gly142, Thr143, and Gly144 each contribute to the GTP site. Glu69 contributes to the Mg(2+) binding site. Ser172 is modified (phosphoserine; by CDK1). Residues Asn204 and Asn226 each coordinate GTP. The disordered stretch occupies residues 430-451; the sequence is AGLEDSEEDVEEAEVEAEDKDH. Residues 433–451 show a composition bias toward acidic residues; the sequence is EDSEEDVEEAEVEAEDKDH. Phosphoserine is present on Ser435. Glu440 carries the 5-glutamyl polyglutamate modification.

The protein belongs to the tubulin family. Dimer of alpha and beta chains. A typical microtubule is a hollow water-filled tube with an outer diameter of 25 nm and an inner diameter of 15 nM. Alpha-beta heterodimers associate head-to-tail to form protofilaments running lengthwise along the microtubule wall with the beta-tubulin subunit facing the microtubule plus end conferring a structural polarity. Microtubules usually have 13 protofilaments but different protofilament numbers can be found in some organisms and specialized cells. Interacts with RANBP10. Requires Mg(2+) as cofactor. In terms of processing, some glutamate residues at the C-terminus are polyglycylated, resulting in polyglycine chains on the gamma-carboxyl group. Glycylation is mainly limited to tubulin incorporated into axonemes (cilia and flagella) whereas glutamylation is prevalent in neuronal cells, centrioles, axonemes, and the mitotic spindle. Both modifications can coexist on the same protein on adjacent residues, and lowering polyglycylation levels increases polyglutamylation, and reciprocally. Cilia and flagella glycylation is required for their stability and maintenance. Flagella glycylation controls sperm motility. Some glutamate residues at the C-terminus are polyglutamylated, resulting in polyglutamate chains on the gamma-carboxyl group. Polyglutamylation plays a key role in microtubule severing by spastin (SPAST). SPAST preferentially recognizes and acts on microtubules decorated with short polyglutamate tails: severing activity by SPAST increases as the number of glutamates per tubulin rises from one to eight, but decreases beyond this glutamylation threshold. Glutamylation is also involved in cilia motility. Post-translationally, phosphorylated on Ser-172 by CDK1 during the cell cycle, from metaphase to telophase, but not in interphase. This phosphorylation inhibits tubulin incorporation into microtubules.

Its subcellular location is the cytoplasm. The protein resides in the cytoskeleton. Its function is as follows. Tubulin is the major constituent of microtubules, a cylinder consisting of laterally associated linear protofilaments composed of alpha- and beta-tubulin heterodimers. Microtubules grow by the addition of GTP-tubulin dimers to the microtubule end, where a stabilizing cap forms. Below the cap, tubulin dimers are in GDP-bound state, owing to GTPase activity of alpha-tubulin. The chain is Tubulin beta-1 chain (Tubb1) from Mus musculus (Mouse).